The chain runs to 162 residues: uncharacterized protein (162 aa).

Residues 1-23 are disordered; sequence MAQLPLSPAPQRPETKTPGKPEA. The segment covering 13-23 has biased composition (basic and acidic residues); that stretch reads PETKTPGKPEA.

This is an uncharacterized protein from Rhodobacter capsulatus (Rhodopseudomonas capsulata).